The following is a 428-amino-acid chain: MSNIVIVGAQWGDEGKGKIADTLAEKSDLVVRYQGGNNAGHTLVVNGKKTFLHLIPSGVLHKHTKCVIGHGVVVDPIALDTEITRLQDTGIEISANNLFVSESCTVITSYHKLLDAVRENSTTEKIGTTGKGIGPAYEDKVSRKGIKFKHLFDKDVLRSRLALSLAEKETLFKDLYKVEYPSLEEEFERLYTLGQKLKQYSADTFSIIDQAVSTGKNVVYEGAQGVLLDIDYGTYPFVTSSNTSVAGVYSGATTAGHNLDHVIGITKAYTTRVGEGPFPTELFDDTGLFIQKKGGEIGVTTGRIRRCGWLDLPLLKYSAKCSNLTSIALTKVDVLSDLDTLKICIGYKYEGKEIFCAYPGIDLYKVEPILVDMEPFSLDEVVTKENMPSALKTYLRTIENHIGIPISSLAYGPSREQILFFEDYFKKG.

GTP contacts are provided by residues 12–18 (GDEGKGK) and 40–42 (GHT). The active-site Proton acceptor is the aspartate 13. Mg(2+) contacts are provided by aspartate 13 and glycine 40. IMP is bound by residues 13–16 (DEGK), 38–41 (NAGH), threonine 129, arginine 143, glutamine 224, threonine 239, and arginine 303. Histidine 41 acts as the Proton donor in catalysis. 299–305 (VTTGRIR) is a binding site for substrate. Residues arginine 305, 331-333 (KVD), and 410-412 (AYG) contribute to the GTP site.

This sequence belongs to the adenylosuccinate synthetase family. As to quaternary structure, homodimer. It depends on Mg(2+) as a cofactor.

The protein localises to the cytoplasm. It catalyses the reaction IMP + L-aspartate + GTP = N(6)-(1,2-dicarboxyethyl)-AMP + GDP + phosphate + 2 H(+). Its pathway is purine metabolism; AMP biosynthesis via de novo pathway; AMP from IMP: step 1/2. In terms of biological role, plays an important role in the de novo pathway of purine nucleotide biosynthesis. Catalyzes the first committed step in the biosynthesis of AMP from IMP. In Francisella philomiragia subsp. philomiragia (strain ATCC 25017 / CCUG 19701 / FSC 153 / O#319-036), this protein is Adenylosuccinate synthetase.